We begin with the raw amino-acid sequence, 483 residues long: tRNA-2-methylthio-N(6)-dimethylallyladenosine synthase (483 aa).

In terms of domain architecture, MTTase N-terminal spans 31 to 148 (KKLYIETQGC…LPQMLDQHQD (118 aa)). The [4Fe-4S] cluster site is built by Cys40, Cys77, Cys111, Cys192, Cys196, and Cys199. A Radical SAM core domain is found at 178-410 (RVEGFKAFVS…QHWIKQSSIR (233 aa)). One can recognise a TRAM domain in the interval 413-477 (DAMQGTIQRV…LNLVYGELLN (65 aa)).

This sequence belongs to the methylthiotransferase family. MiaB subfamily. Monomer. Requires [4Fe-4S] cluster as cofactor.

Its subcellular location is the cytoplasm. The enzyme catalyses N(6)-dimethylallyladenosine(37) in tRNA + (sulfur carrier)-SH + AH2 + 2 S-adenosyl-L-methionine = 2-methylsulfanyl-N(6)-dimethylallyladenosine(37) in tRNA + (sulfur carrier)-H + 5'-deoxyadenosine + L-methionine + A + S-adenosyl-L-homocysteine + 2 H(+). In terms of biological role, catalyzes the methylthiolation of N6-(dimethylallyl)adenosine (i(6)A), leading to the formation of 2-methylthio-N6-(dimethylallyl)adenosine (ms(2)i(6)A) at position 37 in tRNAs that read codons beginning with uridine. This Acinetobacter baylyi (strain ATCC 33305 / BD413 / ADP1) protein is tRNA-2-methylthio-N(6)-dimethylallyladenosine synthase.